Consider the following 947-residue polypeptide: Bifunctional glutamine synthetase adenylyltransferase/adenylyl-removing enzyme (947 aa).

Residues Met-1–Glu-440 are adenylyl removase. Residues Ser-450–Val-947 are adenylyl transferase.

It belongs to the GlnE family. It depends on Mg(2+) as a cofactor.

It catalyses the reaction [glutamine synthetase]-O(4)-(5'-adenylyl)-L-tyrosine + phosphate = [glutamine synthetase]-L-tyrosine + ADP. The catalysed reaction is [glutamine synthetase]-L-tyrosine + ATP = [glutamine synthetase]-O(4)-(5'-adenylyl)-L-tyrosine + diphosphate. Involved in the regulation of glutamine synthetase GlnA, a key enzyme in the process to assimilate ammonia. When cellular nitrogen levels are high, the C-terminal adenylyl transferase (AT) inactivates GlnA by covalent transfer of an adenylyl group from ATP to specific tyrosine residue of GlnA, thus reducing its activity. Conversely, when nitrogen levels are low, the N-terminal adenylyl removase (AR) activates GlnA by removing the adenylyl group by phosphorolysis, increasing its activity. The regulatory region of GlnE binds the signal transduction protein PII (GlnB) which indicates the nitrogen status of the cell. In Salmonella dublin (strain CT_02021853), this protein is Bifunctional glutamine synthetase adenylyltransferase/adenylyl-removing enzyme.